The chain runs to 188 residues: UPF0232 protein RHA1_ro03670 (188 aa).

Disordered stretches follow at residues 1 to 20 (MTDD…PEVK), 31 to 78 (EARA…QPFG), and 166 to 188 (PTAP…DTYG). Residues 7–16 (PTAPAAAAPE) are compositionally biased toward low complexity.

Belongs to the UPF0232 family.

The polypeptide is UPF0232 protein RHA1_ro03670 (Rhodococcus jostii (strain RHA1)).